A 176-amino-acid chain; its full sequence is Adenine phosphoribosyltransferase (176 aa).

The protein belongs to the purine/pyrimidine phosphoribosyltransferase family. Homodimer.

It localises to the cytoplasm. The enzyme catalyses AMP + diphosphate = 5-phospho-alpha-D-ribose 1-diphosphate + adenine. It functions in the pathway purine metabolism; AMP biosynthesis via salvage pathway; AMP from adenine: step 1/1. Its function is as follows. Catalyzes a salvage reaction resulting in the formation of AMP, that is energically less costly than de novo synthesis. The polypeptide is Adenine phosphoribosyltransferase (Methylobacillus flagellatus (strain ATCC 51484 / DSM 6875 / VKM B-1610 / KT)).